The primary structure comprises 168 residues: Disulfide bond formation protein B (168 aa).

At 1–11 the chain is on the cytoplasmic side; that stretch reads MSNPMRPVRSI. Residues 12–28 traverse the membrane as a helical segment; that stretch reads LLAIFTGCAGLIGYALY. Residues 29-46 lie on the Periplasmic side of the membrane; it reads LQLVENLLPCPLCVVQRM. Residues Cys-38 and Cys-41 are joined by a disulfide bond. The helical transmembrane segment at 47 to 63 threads the bilayer; the sequence is AYWLIGLTALAGFFHTP. Over 64 to 69 the chain is Cytoplasmic; it reads ETTGRR. A helical membrane pass occupies residues 70 to 87; the sequence is IYAGLMAVFAFTGGLVAL. The Periplasmic portion of the chain corresponds to 88-143; it reads RQAWLVRYPEAFECGISPEEAFLNALPLARWWPVMFEANGDCADVTWKFASLTLPD. A disulfide bond links Cys-101 and Cys-129. A helical membrane pass occupies residues 144-162; it reads WSAIFFMILAALSIYVLLV. The Cytoplasmic portion of the chain corresponds to 163–168; it reads RENQRE.

This sequence belongs to the DsbB family.

Its subcellular location is the cell inner membrane. In terms of biological role, required for disulfide bond formation in some periplasmic proteins. Acts by oxidizing the DsbA protein. The protein is Disulfide bond formation protein B of Nitrosospira multiformis (strain ATCC 25196 / NCIMB 11849 / C 71).